A 423-amino-acid chain; its full sequence is vacuole-related protein 17 (423 aa).

Ala-2 carries the N-acetylalanine modification. The tract at residues 109-134 (ATVPNEAPNDSPQSQSTRSSLGSFQP) is disordered. An MYO2-binding region spans residues 110-170 (TVPNEAPNDS…NPINEVDCPS (61 aa)). Polar residues predominate over residues 116-131 (PNDSPQSQSTRSSLGS). At Ser-119 the chain carries Phosphoserine. Position 149 is a phosphothreonine (Thr-149). Residues 150-211 (PSKPPKKSVG…SKKPSSSDTY (62 aa)) form a disordered region. At Ser-178 the chain carries Phosphoserine. Basic residues predominate over residues 182–192 (QPARNRTLRAA). Residues 199–211 (LNKSKKPSSSDTY) show a composition bias toward polar residues. Thr-248 carries the phosphothreonine modification. Ser-269 carries the phosphoserine modification. The tract at residues 290–380 (SASFFRPSNP…ISESFQSKRG (91 aa)) is VAC8-binding.

It belongs to the VAC17 family. In terms of assembly, interacts with MYO2 and VAC8. Interacts with ATG18.

The protein localises to the vacuole membrane. Its function is as follows. Vacuole-specific MYO2 receptor required for vacuole inheritance. Binds simultaneously to MYO2 and to VAC8, a vacuolar membrane protein, forming a transport complex which moves the attached vacuole membrane along actin cables into the bud. Once the vacuole arrives in the bud, VAC17 is degraded, depositing the vacuole in its correct location. The chain is vacuole-related protein 17 (VAC17) from Saccharomyces cerevisiae (strain ATCC 204508 / S288c) (Baker's yeast).